A 282-amino-acid polypeptide reads, in one-letter code: Bifunctional protein FolD (282 aa).

Residues glycine 166–serine 168 and isoleucine 232 each bind NADP(+).

It belongs to the tetrahydrofolate dehydrogenase/cyclohydrolase family. As to quaternary structure, homodimer.

It carries out the reaction (6R)-5,10-methylene-5,6,7,8-tetrahydrofolate + NADP(+) = (6R)-5,10-methenyltetrahydrofolate + NADPH. The enzyme catalyses (6R)-5,10-methenyltetrahydrofolate + H2O = (6R)-10-formyltetrahydrofolate + H(+). It functions in the pathway one-carbon metabolism; tetrahydrofolate interconversion. Its function is as follows. Catalyzes the oxidation of 5,10-methylenetetrahydrofolate to 5,10-methenyltetrahydrofolate and then the hydrolysis of 5,10-methenyltetrahydrofolate to 10-formyltetrahydrofolate. The protein is Bifunctional protein FolD of Haemophilus influenzae (strain PittEE).